A 300-amino-acid polypeptide reads, in one-letter code: MKTGNQFNTVALVGRSNTPGIAEPLTTLAGCIAKLGFEVVFEVDTAREIGISGYPALTPAEIGARADVAVVLGGDGTMLGIGRQLAPYKTPLIGINHGRLGFITDIAAADMQARVPVILSGKFEREERSLLEARIVRDGEPIYHALAFNDVVVNRSGFSGMVELRASVDGRFMYNQRSDGLIVATPTGSTAYALSSAGPILHPQLQGIVLVPIAPHALSNRPIVLPDDSKIAIQIVGGRDVNVNFDMQSFTALELNDTIEVRRSKHTVPFLHPVGYSYYATLRKKLHWNEHASNEDDTAS.

Aspartate 75 serves as the catalytic Proton acceptor. Residues 75-76 (DG), 149-150 (ND), arginine 177, aspartate 179, 190-195 (TAYALS), alanine 214, and glutamine 248 contribute to the NAD(+) site.

Belongs to the NAD kinase family. Requires a divalent metal cation as cofactor.

The protein localises to the cytoplasm. It carries out the reaction NAD(+) + ATP = ADP + NADP(+) + H(+). Its function is as follows. Involved in the regulation of the intracellular balance of NAD and NADP, and is a key enzyme in the biosynthesis of NADP. Catalyzes specifically the phosphorylation on 2'-hydroxyl of the adenosine moiety of NAD to yield NADP. The chain is NAD kinase from Burkholderia ambifaria (strain MC40-6).